A 261-amino-acid polypeptide reads, in one-letter code: Insulin-like growth factor-binding protein-related protein 1 (261 aa).

The N-terminal stretch at 1–17 is a signal peptide; that stretch reads MWIPLLLVALVVPAIRC. An IGFBP N-terminal domain is found at 18–101; the sequence is ERKCGECNPE…DPPEAMCVCL (84 aa). Disulfide bonds link Cys21-Cys45, Cys24-Cys47, Cys29-Cys48, Cys36-Cys51, Cys59-Cys82, Cys76-Cys98, Cys100-Cys118, and Cys107-Cys139. The Kazal-like domain occupies 70-141; sequence NRGHGPCGEY…RAMHRGPCKS (72 aa). Residues 143 to 243 enclose the Ig-like C2-type domain; sequence PKITSPPEEA…GESSAAARVV (101 aa). A glycan (N-linked (GlcNAc...) asparagine) is linked at Asn154. Cys164 and Cys227 are oxidised to a cystine.

In terms of tissue distribution, expressed by the venom gland.

The protein localises to the secreted. This is Insulin-like growth factor-binding protein-related protein 1 from Cupiennius salei (American wandering spider).